The chain runs to 308 residues: uncharacterized protein (308 aa).

Residues 1-28 (MILMKKFEIILFLFIAVLIFVFGYFVGA) form the signal peptide.

This is an uncharacterized protein from Methanocaldococcus jannaschii (strain ATCC 43067 / DSM 2661 / JAL-1 / JCM 10045 / NBRC 100440) (Methanococcus jannaschii).